Reading from the N-terminus, the 188-residue chain is 3-deoxy-D-manno-octulosonate 8-phosphate phosphatase KdsC (188 aa).

Mg(2+) contacts are provided by Asp-32 and Asp-34. Residues Asp-34, 55 to 59, Arg-63, Arg-78, Arg-86, and Lys-102 contribute to the substrate site; that span reads NVRDG. Asp-125 contributes to the Mg(2+) binding site.

Homotetramer. Requires Mg(2+) as cofactor. Co(2+) is required as a cofactor.

The catalysed reaction is 3-deoxy-alpha-D-manno-2-octulosonate-8-phosphate + H2O = 3-deoxy-alpha-D-manno-oct-2-ulosonate + phosphate. It functions in the pathway carbohydrate biosynthesis; 3-deoxy-D-manno-octulosonate biosynthesis; 3-deoxy-D-manno-octulosonate from D-ribulose 5-phosphate: step 3/3. Its pathway is bacterial outer membrane biogenesis; lipopolysaccharide biosynthesis. Inhibited by calcium, cadmium, mercury, and copper ions. Functionally, catalyzes the hydrolysis of 3-deoxy-D-manno-octulosonate 8-phosphate (KDO 8-P) to 3-deoxy-D-manno-octulosonate (KDO) and inorganic phosphate. The sequence is that of 3-deoxy-D-manno-octulosonate 8-phosphate phosphatase KdsC from Escherichia coli (strain B / BL21-DE3).